A 126-amino-acid polypeptide reads, in one-letter code: Large ribosomal subunit protein bL12 (126 aa).

Belongs to the bacterial ribosomal protein bL12 family. In terms of assembly, homodimer. Part of the ribosomal stalk of the 50S ribosomal subunit. Forms a multimeric L10(L12)X complex, where L10 forms an elongated spine to which 2 to 4 L12 dimers bind in a sequential fashion. Binds GTP-bound translation factors.

Its function is as follows. Forms part of the ribosomal stalk which helps the ribosome interact with GTP-bound translation factors. Is thus essential for accurate translation. The chain is Large ribosomal subunit protein bL12 from Moorella thermoacetica (strain ATCC 39073 / JCM 9320).